Consider the following 91-residue polypeptide: MWPVLWAAARTYAPYITFPVAFVVGAVGYQLEWFIRGTPGHPVEEQSILEKREERTLQETMGKDVTQVISLKEKLEFTPKAVLNRNRQEKS.

A helical transmembrane segment spans residues 12-34 (YAPYITFPVAFVVGAVGYQLEWF).

Belongs to the SMIM12 family.

Its subcellular location is the membrane. The protein is Small integral membrane protein 12-B (smim12-b) of Xenopus laevis (African clawed frog).